We begin with the raw amino-acid sequence, 270 residues long: Neurotrophic factor BDNF precursor form (270 aa).

The signal sequence occupies residues 1 to 18; sequence MTILFVTMVISYFSCMRA. The propeptide occupies 19 to 151; sequence APMREIPGVQ…AANMSMRVRR (133 aa). A glycan (N-linked (GlcNAc...) asparagine) is linked at asparagine 144. Intrachain disulfides connect cysteine 164-cysteine 231, cysteine 209-cysteine 260, and cysteine 219-cysteine 262.

This sequence belongs to the NGF-beta family.

It localises to the secreted. Promotes the survival of neuronal populations that are all located either in the central nervous system or directly connected to it. This chain is Neurotrophic factor BDNF precursor form (bdnf), found in Cyprinus carpio (Common carp).